The primary structure comprises 317 residues: Transaldolase (317 aa).

K126 serves as the catalytic Schiff-base intermediate with substrate.

This sequence belongs to the transaldolase family. Type 1 subfamily. Homodimer.

It localises to the cytoplasm. The catalysed reaction is D-sedoheptulose 7-phosphate + D-glyceraldehyde 3-phosphate = D-erythrose 4-phosphate + beta-D-fructose 6-phosphate. It participates in carbohydrate degradation; pentose phosphate pathway; D-glyceraldehyde 3-phosphate and beta-D-fructose 6-phosphate from D-ribose 5-phosphate and D-xylulose 5-phosphate (non-oxidative stage): step 2/3. Functionally, transaldolase is important for the balance of metabolites in the pentose-phosphate pathway. This chain is Transaldolase, found in Burkholderia lata (strain ATCC 17760 / DSM 23089 / LMG 22485 / NCIMB 9086 / R18194 / 383).